The chain runs to 371 residues: Solute carrier family 35 member F6 (371 aa).

An N-terminal signal peptide occupies residues 1–25 (MAWTKHQLFLAGLMLVTGSINTLSA). 2 helical membrane-spanning segments follow: residues 48–68 (FLQA…FYLL) and 89–109 (LLFL…YVAL). Positions 104-160 (LMYVALNMTSASSFQMLRGAVIIFTGLFSVAFLGRRLVLSQWLGILATIAGLVVVGL) constitute an EamA domain. N-linked (GlcNAc...) asparagine glycosylation is present at N110. 7 consecutive transmembrane segments (helical) span residues 117-137 (FQML…AFLG), 140-160 (LVLS…VVGL), 176-196 (VITG…QMVL), 216-236 (GLFG…IPAG), 261-281 (LIAV…FAGI), 295-312 (LDSL…ALGW), and 317-336 (ALQI…YNGL). The interval 347–371 (GRPPAEESEQERLLGGSRTPINDAS) is disordered. Position 365 is a phosphothreonine (T365).

It belongs to the SLC35F solute transporter family. In terms of assembly, interacts with SLC25A5.

The protein resides in the mitochondrion. It is found in the lysosome membrane. Functionally, involved in the maintenance of mitochondrial membrane potential in pancreatic ductal adenocarcinoma (PDAC) cells. Promotes pancreatic ductal adenocarcinoma (PDAC) cell growth. May play a role as a nucleotide-sugar transporter. This Pongo abelii (Sumatran orangutan) protein is Solute carrier family 35 member F6 (SLC35F6).